A 513-amino-acid chain; its full sequence is uncharacterized protein (513 aa).

Residues 11–219 form the CYTH domain; it reads HLEVERKFDV…SKLARVLGAT (209 aa). Residues 228 to 506 form the CHAD domain; it reads PQPPADPVHR…LEAALRKLDK (279 aa).

This is an uncharacterized protein from Mycobacterium tuberculosis (strain ATCC 25618 / H37Rv).